A 451-amino-acid polypeptide reads, in one-letter code: Gamma-aminobutyric acid receptor subunit alpha-2 (451 aa).

Residues 1 to 28 form the signal peptide; that stretch reads MKTKLNSSNMQLLLFVFLAWDPARLVLA. Topologically, residues 29 to 249 are extracellular; sequence NIQEDEAKNN…MTAHFHLKRK (221 aa). N38 carries an N-linked (GlcNAc...) asparagine glycan. R94 lines the 4-aminobutanoate pocket. N-linked (GlcNAc...) asparagine glycosylation occurs at N138. T157 contributes to the 4-aminobutanoate binding site. An intrachain disulfide couples C166 to C180. N201 carries an N-linked (GlcNAc...) asparagine glycan. The chain crosses the membrane as a helical span at residues 250 to 270; it reads IGYFVIQTYLPCIMTVILSQV. The Cytoplasmic segment spans residues 271 to 280; the sequence is SFWLNRESVP. A helical membrane pass occupies residues 281–300; that stretch reads ARTVFGVTTVLTMTTLSISA. Topologically, residues 301 to 311 are extracellular; sequence RNSLPKVAYAT. The helical transmembrane segment at 312-332 threads the bilayer; the sequence is AMDWFIAVCYAFVFSALIEFA. Topologically, residues 333–420 are cytoplasmic; it reads TVNYFTKRGW…FNSVSKIDRM (88 aa). Residues 421–441 form a helical membrane-spanning segment; it reads SRIVFPVLFGTFNLVYWATYL. The Extracellular segment spans residues 442–451; that stretch reads NREPVLGVSP.

Belongs to the ligand-gated ion channel (TC 1.A.9) family. Gamma-aminobutyric acid receptor (TC 1.A.9.5) subfamily. GABRA2 sub-subfamily. Heteropentamer, formed by a combination of alpha (GABRA1-6), beta (GABRB1-3), gamma (GABRG1-3), delta (GABRD), epsilon (GABRE), rho (GABRR1-3), pi (GABRP) and theta (GABRQ) subunits, each subunit exhibiting distinct physiological and pharmacological properties. Interacts with UBQLN1. Interacts with KIF21B. Interacts with LHFPL4. Interacts with SHISA7; interaction leads to the regulation of GABA(A) receptor trafficking, channel deactivation kinetics and pharmacology. In terms of processing, glycosylated.

The protein localises to the postsynaptic cell membrane. The protein resides in the cell membrane. It is found in the cytoplasmic vesicle membrane. It localises to the cell projection. Its subcellular location is the dendrite. It catalyses the reaction chloride(in) = chloride(out). Activated by pentobarbital. Inhibited by the antagonist bicuculline. Functionally, alpha subunit of the heteropentameric ligand-gated chloride channel gated by gamma-aminobutyric acid (GABA), a major inhibitory neurotransmitter in the brain. GABA-gated chloride channels, also named GABA(A) receptors (GABAAR), consist of five subunits arranged around a central pore and contain GABA active binding site(s) located at the alpha and beta subunit interface(s). When activated by GABA, GABAARs selectively allow the flow of chloride anions across the cell membrane down their electrochemical gradient. Chloride influx into the postsynaptic neuron following GABAAR opening decreases the neuron ability to generate a new action potential, thereby reducing nerve transmission. The alpha-2 subunit exhibits synaptogenic activity together with beta-2 and very little to no activity together with beta-3, the gamma-2 subunit being necessary but not sufficient to induce rapid synaptic contacts formation. This is Gamma-aminobutyric acid receptor subunit alpha-2 (GABRA2) from Bos taurus (Bovine).